The chain runs to 149 residues: Large ribosomal subunit protein bL9 (149 aa).

Belongs to the bacterial ribosomal protein bL9 family.

Binds to the 23S rRNA. The protein is Large ribosomal subunit protein bL9 of Actinobacillus succinogenes (strain ATCC 55618 / DSM 22257 / CCUG 43843 / 130Z).